The chain runs to 79 residues: Peptide Im-5 (79 aa).

The signal sequence occupies residues 1–23 (MKYRKQLLVLFFAYFLVVNESEA). A propeptide spanning residues 49–79 (RALMKRDLQDRMDPYQRNLKLDRYLKQLALD) is cleaved from the precursor.

It belongs to the non-disulfide-bridged peptide (NDBP) superfamily. Medium-length antimicrobial peptide (group 3) family. As to expression, expressed by the venom gland.

The protein localises to the secreted. It is found in the target cell membrane. Antimicrobial peptide that may act by disrupting the integrity of the bacterial cell membrane. Has antibacterial activity against Gram-negative bacterium E.coli NBRC 3972 (MIC=10 uM) and against Gram-positive bacteria S.aureus NBRC 13276 (MIC=2.5-5 uM) and B.subtilis NBRC 3009 (MIC=0.5-1 uM). Also shows potent activity against antibiotic-sensitive and -resistant Acinetobacter baumannii (MIC=1.8-3.6 uM). Shows cytolytic activity against human and sheep erythrocytes. Toxic to cricket A.domestica. This is Peptide Im-5 from Isometrus maculatus (Lesser brown scorpion).